Reading from the N-terminus, the 99-residue chain is Large ribosomal subunit protein bL28 (99 aa).

The protein belongs to the bacterial ribosomal protein bL28 family.

This chain is Large ribosomal subunit protein bL28, found in Brucella anthropi (strain ATCC 49188 / DSM 6882 / CCUG 24695 / JCM 21032 / LMG 3331 / NBRC 15819 / NCTC 12168 / Alc 37) (Ochrobactrum anthropi).